A 208-amino-acid chain; its full sequence is Urease accessory protein UreG 1 (208 aa).

14-21 (GPVGSGKT) is a binding site for GTP.

Belongs to the SIMIBI class G3E GTPase family. UreG subfamily. As to quaternary structure, homodimer. UreD, UreF and UreG form a complex that acts as a GTP-hydrolysis-dependent molecular chaperone, activating the urease apoprotein by helping to assemble the nickel containing metallocenter of UreC. The UreE protein probably delivers the nickel.

Its subcellular location is the cytoplasm. In terms of biological role, facilitates the functional incorporation of the urease nickel metallocenter. This process requires GTP hydrolysis, probably effectuated by UreG. This Brucella ovis (strain ATCC 25840 / 63/290 / NCTC 10512) protein is Urease accessory protein UreG 1.